The following is a 333-amino-acid chain: C4-dicarboxylate-binding periplasmic protein DctP (333 aa).

An N-terminal signal peptide occupies residues 1-26 (MLTRRILGALVGATALSLALSVPALA).

This sequence belongs to the bacterial solute-binding protein 7 family. The complex comprises the extracytoplasmic solute receptor protein DctP, and the two transmembrane proteins DctQ and DctM.

The protein localises to the periplasm. In terms of biological role, part of the tripartite ATP-independent periplasmic (TRAP) transport system DctPQM involved in C4-dicarboxylates uptake. Binds C4-dicarboxylates such as fumarate, succinate, L-malate and D-malate. The polypeptide is C4-dicarboxylate-binding periplasmic protein DctP (Rhodobacter capsulatus (Rhodopseudomonas capsulata)).